The chain runs to 298 residues: Protease HtpX homolog (298 aa).

2 consecutive transmembrane segments (helical) span residues Val-14–Leu-34 and Tyr-39–Phe-59. His-143 serves as a coordination point for Zn(2+). Glu-144 is an active-site residue. Position 147 (His-147) interacts with Zn(2+). Transmembrane regions (helical) follow at residues Ile-158–Trp-178 and Ile-197–Ile-217. A Zn(2+)-binding site is contributed by Glu-226.

Belongs to the peptidase M48B family. The cofactor is Zn(2+).

The protein localises to the cell membrane. This chain is Protease HtpX homolog, found in Streptococcus pyogenes serotype M6 (strain ATCC BAA-946 / MGAS10394).